The chain runs to 626 residues: DNA-directed RNA polymerase subunit gamma (626 aa).

Residues C71, C73, C86, and C89 each contribute to the Zn(2+) site. Mg(2+) contacts are provided by D467, D469, and D471.

The protein belongs to the RNA polymerase beta' chain family. RpoC1 subfamily. In terms of assembly, in cyanobacteria the RNAP catalytic core is composed of 2 alpha, 1 beta, 1 beta', 1 gamma and 1 omega subunit. When a sigma factor is associated with the core the holoenzyme is formed, which can initiate transcription. Requires Mg(2+) as cofactor. It depends on Zn(2+) as a cofactor.

The enzyme catalyses RNA(n) + a ribonucleoside 5'-triphosphate = RNA(n+1) + diphosphate. Functionally, DNA-dependent RNA polymerase catalyzes the transcription of DNA into RNA using the four ribonucleoside triphosphates as substrates. The sequence is that of DNA-directed RNA polymerase subunit gamma from Microcystis aeruginosa (strain NIES-843 / IAM M-2473).